The following is a 34-amino-acid chain: Trypsin inhibitor (34 aa).

2 disulfide bridges follow: cysteine 7/cysteine 29 and cysteine 11/cysteine 25.

It is found in the secreted. Inhibits trypsin. The polypeptide is Trypsin inhibitor (Veronica hederifolia (Ivy-leaved speedwell)).